Reading from the N-terminus, the 148-residue chain is 3-hydroxyacyl-[acyl-carrier-protein] dehydratase FabZ (148 aa).

His-55 is a catalytic residue.

The protein belongs to the thioester dehydratase family. FabZ subfamily.

The protein localises to the cytoplasm. It catalyses the reaction a (3R)-hydroxyacyl-[ACP] = a (2E)-enoyl-[ACP] + H2O. Functionally, involved in unsaturated fatty acids biosynthesis. Catalyzes the dehydration of short chain beta-hydroxyacyl-ACPs and long chain saturated and unsaturated beta-hydroxyacyl-ACPs. The sequence is that of 3-hydroxyacyl-[acyl-carrier-protein] dehydratase FabZ from Haemophilus influenzae (strain 86-028NP).